The sequence spans 274 residues: Large ribosomal subunit protein uL2cz/uL2cy (274 aa).

2 disordered regions span residues 1 to 21 (MAIH…VDSQ) and 224 to 274 (NPVD…RRSK).

This sequence belongs to the universal ribosomal protein uL2 family. Part of the 50S ribosomal subunit.

The protein localises to the plastid. It is found in the chloroplast. This chain is Large ribosomal subunit protein uL2cz/uL2cy (rpl2-A), found in Populus trichocarpa (Western balsam poplar).